The following is a 416-amino-acid chain: Phosphoglycerate kinase (416 aa).

Val-23, Asp-24, Phe-25, Asn-26, Gln-38, Arg-39, Ser-62, His-63, Gly-65, Arg-66, Leu-121, Arg-122, His-168, and Arg-169 together coordinate (2R)-3-phosphoglycerate. ADP is bound at residue Gly-212. Position 212 (Gly-212) interacts with CDP. Positions 213 and 214 each coordinate AMP. ATP is bound at residue Ala-213. Ala-213 is a binding site for Mg(2+). Mg(2+) is bound by residues Ala-216 and Asp-217. Asp-217 contacts CDP. Lys-218 is an AMP binding site. Residue Lys-218 participates in ATP binding. Gly-236 contacts ADP. Gly-236 is a CDP binding site. AMP-binding residues include Gly-237 and Gly-311. ATP is bound by residues Gly-237 and Gly-311. CDP is bound by residues Gly-336 and Phe-341. Position 341 (Phe-341) interacts with ADP. Glu-342 serves as a coordination point for AMP. The ATP site is built by Glu-342, Asp-373, and Thr-374. Asp-373 serves as a coordination point for Mg(2+).

The protein belongs to the phosphoglycerate kinase family. In terms of assembly, monomer. Requires Mg(2+) as cofactor.

It localises to the cytoplasm. The protein localises to the mitochondrion. It carries out the reaction (2R)-3-phosphoglycerate + ATP = (2R)-3-phospho-glyceroyl phosphate + ADP. It functions in the pathway carbohydrate degradation; glycolysis; pyruvate from D-glyceraldehyde 3-phosphate: step 2/5. In terms of biological role, catalyzes one of the two ATP producing reactions in the glycolytic pathway via the reversible conversion of 1,3-diphosphoglycerate to 3-phosphoglycerate. Both L- and D- forms of purine and pyrimidine nucleotides can be used as substrates, but the activity is much lower on pyrimidines. Negatively regulates the biosynthesis of acetyl-CoA from pyruvate in the mitochondrion. The polypeptide is Phosphoglycerate kinase (PGK) (Kluyveromyces lactis (strain ATCC 8585 / CBS 2359 / DSM 70799 / NBRC 1267 / NRRL Y-1140 / WM37) (Yeast)).